The sequence spans 376 residues: MYG1 exonuclease (376 aa).

The transit peptide at M1 to I47 directs the protein to the mitochondrion. Residue S120 is modified to Phosphoserine. 2 positions are modified to N6-acetyllysine: K267 and K273.

Belongs to the MYG1 family. Ubiquitously expressed, with highest levels in testis.

Its subcellular location is the nucleus. The protein localises to the nucleoplasm. It localises to the mitochondrion matrix. It is found in the nucleolus. Functionally, 3'-5' RNA exonuclease which cleaves in situ on specific transcripts in both nucleus and mitochondrion. Involved in regulating spatially segregated organellar RNA processing, acts as a coordinator of nucleo-mitochondrial crosstalk. In nucleolus, processes pre-ribosomal RNA involved in ribosome assembly and alters cytoplasmic translation. In mitochondrial matrix, processes 3'-termini of the mito-ribosomal and messenger RNAs and controls translation of mitochondrial proteins. The protein is MYG1 exonuclease of Homo sapiens (Human).